A 301-amino-acid polypeptide reads, in one-letter code: uncharacterized protein (301 aa).

9 helical membrane-spanning segments follow: residues 1–21 (MSWI…LGIV), 33–53 (SVLF…YFYY), 72–92 (AMSL…KIPG), 101–121 (FGII…TILI), 124–144 (FAWL…KTFY), 185–205 (YFTP…VFAI), 220–240 (IIYT…FCLA), 246–266 (FSYI…KIFI), and 270–290 (IAIP…FGII).

This sequence belongs to the TerC family.

It is found in the cell membrane. This is an uncharacterized protein from Rickettsia felis (strain ATCC VR-1525 / URRWXCal2) (Rickettsia azadi).